A 363-amino-acid chain; its full sequence is Chorismate synthase (363 aa).

Positions 48 and 54 each coordinate NADP(+). FMN is bound by residues 131–133 (RSS), 244–245 (NA), G288, 303–307 (KPTSS), and R329.

This sequence belongs to the chorismate synthase family. Homotetramer. FMNH2 is required as a cofactor.

The enzyme catalyses 5-O-(1-carboxyvinyl)-3-phosphoshikimate = chorismate + phosphate. It functions in the pathway metabolic intermediate biosynthesis; chorismate biosynthesis; chorismate from D-erythrose 4-phosphate and phosphoenolpyruvate: step 7/7. Its function is as follows. Catalyzes the anti-1,4-elimination of the C-3 phosphate and the C-6 proR hydrogen from 5-enolpyruvylshikimate-3-phosphate (EPSP) to yield chorismate, which is the branch point compound that serves as the starting substrate for the three terminal pathways of aromatic amino acid biosynthesis. This reaction introduces a second double bond into the aromatic ring system. The chain is Chorismate synthase from Maricaulis maris (strain MCS10) (Caulobacter maris).